The primary structure comprises 92 residues: Protein AC152 (92 aa).

Acts as a transactivator of AC102 and HE65 genes. Therefore, participates in the global recruitment of G-actin to the host nucleus. This is Protein AC152 (AC152) from Autographa californica nuclear polyhedrosis virus (AcMNPV).